Reading from the N-terminus, the 213-residue chain is 5-deoxy-D-ribulose 1-phosphate aldolase (213 aa).

Substrate contacts are provided by residues 28–29, 45–46, and 74–76; these read GN, SG, and SSE. The Proton donor/acceptor role is filled by Glu-76. Positions 76, 95, 97, and 157 each coordinate Mn(2+).

Belongs to the aldolase class II family. As to quaternary structure, forms homooligomers, possibly homotetramers. The cofactor is Mn(2+).

The enzyme catalyses 5-deoxy-D-ribulose 1-phosphate = dihydroxyacetone phosphate + acetaldehyde. The protein operates within carbohydrate degradation. Functionally, catalyzes the cleavage of 5-deoxy-D-ribulose 1-phosphate to yield dihydroxyacetone phosphate (DHAP) and acetaldehyde, as part of a 5-deoxyribose salvage pathway that recycles this toxic radical SAM enzyme by-product to mainstream metabolites. Is also able to catalyze the reverse reaction, using several aldehydes as substrate, with acetaldehyde being the preferred substrate. The sequence is that of 5-deoxy-D-ribulose 1-phosphate aldolase from Bacillus thuringiensis serovar kurstaki (strain ATCC 35866 / NRRL B-4488 / HD73).